The primary structure comprises 85 residues: MKMTLIAIPTCAAVLVLHTTAAEELEAESQLMEVGMPDTELEAVDGERLFECSVSCEIEKEGNRDCKKKKCKGGWKCKFNMCVKV.

The first 22 residues, methionine 1 to alanine 22, serve as a signal peptide directing secretion. Positions glutamate 23 to arginine 48 are excised as a propeptide. Intrachain disulfides connect cysteine 52/cysteine 66, cysteine 56/cysteine 77, and cysteine 71/cysteine 82.

The protein belongs to the neurotoxin 12 (Hwtx-2) family. 02 (Hwtx-2) subfamily. In terms of tissue distribution, expressed by the venom gland.

The protein resides in the secreted. Its function is as follows. Postsynaptic neurotoxin. This Cyriopagopus hainanus (Chinese bird spider) protein is U4-theraphotoxin-Hhn1p.